A 428-amino-acid polypeptide reads, in one-letter code: 3-phosphoshikimate 1-carboxyvinyltransferase (428 aa).

The 3-phosphoshikimate site is built by Lys22, Ser23, and Arg27. Residue Lys22 participates in phosphoenolpyruvate binding. Gly94 and Arg122 together coordinate phosphoenolpyruvate. 6 residues coordinate 3-phosphoshikimate: Ser168, Ser169, Gln170, Ser196, Asp315, and Lys342. Gln170 provides a ligand contact to phosphoenolpyruvate. Asp315 acts as the Proton acceptor in catalysis. Phosphoenolpyruvate-binding residues include Arg346, Arg389, and Lys414.

It belongs to the EPSP synthase family. As to quaternary structure, monomer.

It localises to the cytoplasm. The catalysed reaction is 3-phosphoshikimate + phosphoenolpyruvate = 5-O-(1-carboxyvinyl)-3-phosphoshikimate + phosphate. It participates in metabolic intermediate biosynthesis; chorismate biosynthesis; chorismate from D-erythrose 4-phosphate and phosphoenolpyruvate: step 6/7. In terms of biological role, catalyzes the transfer of the enolpyruvyl moiety of phosphoenolpyruvate (PEP) to the 5-hydroxyl of shikimate-3-phosphate (S3P) to produce enolpyruvyl shikimate-3-phosphate and inorganic phosphate. The chain is 3-phosphoshikimate 1-carboxyvinyltransferase from Thiobacillus denitrificans (strain ATCC 25259 / T1).